Consider the following 304-residue polypeptide: C-type lectin domain-containing protein 141 (304 aa).

The signal sequence occupies residues 1 to 19 (MRSSSTLLIAFGLFLASMS). The tract at residues 29 to 100 (GSGGHRPPSS…TTPEPTTTKV (72 aa)) is disordered. The segment covering 51 to 99 (TKPPKSTSTPSTSTSTPTTTTTTTTTTTTTPTTTTTTTTTTTPEPTTTK) has biased composition (low complexity).

This chain is C-type lectin domain-containing protein 141 (clec-141), found in Caenorhabditis elegans.